Here is a 513-residue protein sequence, read N- to C-terminus: ATP synthase subunit alpha (513 aa).

169–176 (GDRQTGKT) is a binding site for ATP.

Belongs to the ATPase alpha/beta chains family. As to quaternary structure, F-type ATPases have 2 components, CF(1) - the catalytic core - and CF(0) - the membrane proton channel. CF(1) has five subunits: alpha(3), beta(3), gamma(1), delta(1), epsilon(1). CF(0) has three main subunits: a(1), b(2) and c(9-12). The alpha and beta chains form an alternating ring which encloses part of the gamma chain. CF(1) is attached to CF(0) by a central stalk formed by the gamma and epsilon chains, while a peripheral stalk is formed by the delta and b chains.

The protein resides in the cell inner membrane. It catalyses the reaction ATP + H2O + 4 H(+)(in) = ADP + phosphate + 5 H(+)(out). Produces ATP from ADP in the presence of a proton gradient across the membrane. The alpha chain is a regulatory subunit. In Aliivibrio fischeri (strain ATCC 700601 / ES114) (Vibrio fischeri), this protein is ATP synthase subunit alpha.